We begin with the raw amino-acid sequence, 140 residues long: Ribonuclease P protein subunit p20 (140 aa).

Belongs to the histone-like Alba family. As to quaternary structure, component of nuclear RNase P and RNase MRP complexes. RNase P consists of a catalytic RNA moiety and 10 different protein chains; POP1, POP4, POP5, POP7, RPP14, RPP21, RPP25, RPP30, RPP38 and RPP40. Within the RNase P complex, POP1, POP7 and RPP25 form the 'finger' subcomplex, POP5, RPP14, RPP40 and homodimeric RPP30 form the 'palm' subcomplex, and RPP21, POP4 and RPP38 form the 'wrist' subcomplex. All subunits of the RNase P complex interact with the catalytic RNA. Several subunits of RNase P are also part of the RNase MRP complex. RNase MRP consists of a catalytic RNA moiety and about 8 protein subunits; POP1, POP7, RPP25, RPP30, RPP38, RPP40 and possibly also POP4 and POP5. Interacts with SMN1. POP7 forms a heterodimer with RPP25 that binds to the P3 stem loop of the catalytic RNA.

Its subcellular location is the nucleus. It localises to the nucleolus. The protein resides in the cytoplasm. The protein localises to the cytoplasmic granule. In terms of biological role, component of ribonuclease P, a ribonucleoprotein complex that generates mature tRNA molecules by cleaving their 5'-ends. Also a component of the MRP ribonuclease complex, which cleaves pre-rRNA sequences. This is Ribonuclease P protein subunit p20 (POP7) from Homo sapiens (Human).